Reading from the N-terminus, the 442-residue chain is uncharacterized protein (442 aa).

The signal sequence occupies residues 1-23; it reads MEILLIVLGAVVAGLLCPVQTAA. Disordered stretches follow at residues 36–67 and 91–115; these read TSIS…NSSD and ANET…TNTR. Residues 48-67 are compositionally biased toward low complexity; that stretch reads TSSGELSQSTFSSSSTNSSD. N-linked (GlcNAc...) asparagine glycosylation is found at Asn64, Asn92, Asn99, Asn130, Asn174, Asn225, Asn244, Asn346, Asn363, Asn386, and Asn398.

The protein resides in the secreted. This is an uncharacterized protein from Arthroderma benhamiae (strain ATCC MYA-4681 / CBS 112371) (Trichophyton mentagrophytes).